Reading from the N-terminus, the 172-residue chain is Adenine phosphoribosyltransferase (172 aa).

This sequence belongs to the purine/pyrimidine phosphoribosyltransferase family. Homodimer.

Its subcellular location is the cytoplasm. It catalyses the reaction AMP + diphosphate = 5-phospho-alpha-D-ribose 1-diphosphate + adenine. The protein operates within purine metabolism; AMP biosynthesis via salvage pathway; AMP from adenine: step 1/1. Its function is as follows. Catalyzes a salvage reaction resulting in the formation of AMP, that is energically less costly than de novo synthesis. This Prochlorococcus marinus (strain MIT 9303) protein is Adenine phosphoribosyltransferase.